We begin with the raw amino-acid sequence, 569 residues long: Proline--tRNA ligase (569 aa).

It belongs to the class-II aminoacyl-tRNA synthetase family. ProS type 1 subfamily. As to quaternary structure, homodimer.

The protein localises to the cytoplasm. The enzyme catalyses tRNA(Pro) + L-proline + ATP = L-prolyl-tRNA(Pro) + AMP + diphosphate. In terms of biological role, catalyzes the attachment of proline to tRNA(Pro) in a two-step reaction: proline is first activated by ATP to form Pro-AMP and then transferred to the acceptor end of tRNA(Pro). As ProRS can inadvertently accommodate and process non-cognate amino acids such as alanine and cysteine, to avoid such errors it has two additional distinct editing activities against alanine. One activity is designated as 'pretransfer' editing and involves the tRNA(Pro)-independent hydrolysis of activated Ala-AMP. The other activity is designated 'posttransfer' editing and involves deacylation of mischarged Ala-tRNA(Pro). The misacylated Cys-tRNA(Pro) is not edited by ProRS. The protein is Proline--tRNA ligase of Campylobacter jejuni (strain RM1221).